A 462-amino-acid chain; its full sequence is Transcription initiation factor TFIID subunit 7-like (462 aa).

2 disordered regions span residues 1–97 (MECP…VPDE) and 327–366 (DSRSNNDDDEDEDDEDEDEDEDEDEDEDKEEEEEDCSEEY). Composition is skewed to low complexity over residues 16–30 (STPTVSTSEVTSQQE) and 66–77 (DADSSAQAAAQA). Positions 333–365 (DDDEDEDDEDEDEDEDEDEDEDKEEEEEDCSEE) are enriched in acidic residues. Residues 342–462 (DEDEDEDEDE…QEQLQRFLKK (121 aa)) are a coiled coil.

It belongs to the TAF7 family. TFIID is composed of TATA binding protein (TBP) and a number of TBP-associated factors (TAFs). TAF7L may replace TAF7 in a spermatogenesis-specific form of TFIID. Interacts with TBP; the interaction occurs in a sub-population of cells (pachytene and haploid round spermatids) and is developmentally regulated through differential intracellular localization of the two proteins. Interacts with TAF1. Testis-specific.

It is found in the nucleus. The protein localises to the cytoplasm. Probably functions as a spermatogenesis-specific component of the DNA-binding general transcription factor complex TFIID, a multimeric protein complex that plays a central role in mediating promoter responses to various activators and repressors. May play a role in spermatogenesis. This Homo sapiens (Human) protein is Transcription initiation factor TFIID subunit 7-like (TAF7L).